Here is a 342-residue protein sequence, read N- to C-terminus: Trans-enoyl reductase himH (342 aa).

NADP(+) is bound at residue 46–49 (TDWK). 133 to 140 (LSVSTAAS) is a substrate binding site. NADP(+) is bound by residues 168-171 (SSSV), 191-194 (SQAN), 255-256 (VM), and 329-330 (VS).

It belongs to the zinc-containing alcohol dehydrogenase family. As to quaternary structure, monomer.

The protein operates within secondary metabolite biosynthesis. Trans-enoyl reductase; part of the him gene cluster that mediates the biosynthesis of himeic acid A, a ubiquitin-activating enzyme (E1) inhibitor. First, himA, together with the trans-enoyl reductase himH, catalyzes the formation of apolyketide chain, which is then condensed with leucine by the NRPS activity of himA. Dieckmann cyclization and release from himA gives a tetramic acid intermediate as the product of himA PKS-NRPS. HimG then catalyzes alpha-oxidation of the tetramic acid ring, with a subsequent rearrangement to yield apyrone intermediate. Two terminal methyl groups of polyketide and amide side chains are oxidized to carboxylic acids by himC cytochrome P450 monooxygenase to form himeic acid A. Himeic acid A is further converted to himeic acid B and C during culture growth. No gene responsible for pyrone to pyridone conversion was found in the him gene cluster and himeic acid A is non-enzymatically converted to himeic acid C by the incorporation of an ammonium nitrogen atom in a pH5 buffer, and to himeic acid B at a conversion ratio of 50% during incubation in MeOH for 5 days. The polypeptide is Trans-enoyl reductase himH (Aspergillus japonicus).